We begin with the raw amino-acid sequence, 225 residues long: NAD(P)H-quinone oxidoreductase subunit K, chloroplastic (225 aa).

Residues C43, C44, C108, and C139 each coordinate [4Fe-4S] cluster.

This sequence belongs to the complex I 20 kDa subunit family. In terms of assembly, NDH is composed of at least 16 different subunits, 5 of which are encoded in the nucleus. Requires [4Fe-4S] cluster as cofactor.

Its subcellular location is the plastid. It localises to the chloroplast thylakoid membrane. The enzyme catalyses a plastoquinone + NADH + (n+1) H(+)(in) = a plastoquinol + NAD(+) + n H(+)(out). The catalysed reaction is a plastoquinone + NADPH + (n+1) H(+)(in) = a plastoquinol + NADP(+) + n H(+)(out). Functionally, NDH shuttles electrons from NAD(P)H:plastoquinone, via FMN and iron-sulfur (Fe-S) centers, to quinones in the photosynthetic chain and possibly in a chloroplast respiratory chain. The immediate electron acceptor for the enzyme in this species is believed to be plastoquinone. Couples the redox reaction to proton translocation, and thus conserves the redox energy in a proton gradient. In Hordeum vulgare (Barley), this protein is NAD(P)H-quinone oxidoreductase subunit K, chloroplastic.